A 67-amino-acid polypeptide reads, in one-letter code: DNA-directed RNA polymerase subunit omega (67 aa).

Belongs to the RNA polymerase subunit omega family. As to quaternary structure, the RNAP catalytic core consists of 2 alpha, 1 beta, 1 beta' and 1 omega subunit. When a sigma factor is associated with the core the holoenzyme is formed, which can initiate transcription.

It catalyses the reaction RNA(n) + a ribonucleoside 5'-triphosphate = RNA(n+1) + diphosphate. Functionally, promotes RNA polymerase assembly. Latches the N- and C-terminal regions of the beta' subunit thereby facilitating its interaction with the beta and alpha subunits. The protein is DNA-directed RNA polymerase subunit omega of Paracidovorax citrulli (strain AAC00-1) (Acidovorax citrulli).